Consider the following 106-residue polypeptide: UPF0091 protein RC0354 (106 aa).

Belongs to the UPF0091 family.

In Rickettsia conorii (strain ATCC VR-613 / Malish 7), this protein is UPF0091 protein RC0354.